Reading from the N-terminus, the 302-residue chain is Glycine--tRNA ligase alpha subunit (302 aa).

Belongs to the class-II aminoacyl-tRNA synthetase family. Tetramer of two alpha and two beta subunits.

It localises to the cytoplasm. The catalysed reaction is tRNA(Gly) + glycine + ATP = glycyl-tRNA(Gly) + AMP + diphosphate. The sequence is that of Glycine--tRNA ligase alpha subunit from Xanthomonas oryzae pv. oryzae (strain MAFF 311018).